We begin with the raw amino-acid sequence, 836 residues long: Translation initiation factor IF-2 (836 aa).

A disordered region spans residues 1–234 (MSDTDGKKPL…SLAAMKRKQE (234 aa)). The span at 18–27 (SGQVKQSFSH) shows a compositional bias: polar residues. Residues 50 to 60 (SGSSTTTSSPS) show a composition bias toward low complexity. The span at 88 to 156 (KLREVEDAKR…ATRRAEEAKR (69 aa)) shows a compositional bias: basic and acidic residues. The span at 167–176 (PAESRASAPP) shows a compositional bias: low complexity. A compositionally biased stretch (basic and acidic residues) spans 185 to 206 (SRKEREREADRDRTTKKDDSRR). One can recognise a tr-type G domain in the interval 333–501 (PRPPIITIMG…NIALQAEILD (169 aa)). The segment at 342-349 (GHVDHGKT) is G1. A GTP-binding site is contributed by 342–349 (GHVDHGKT). A G2 region spans residues 367–371 (GITQH). The G3 stretch occupies residues 389-392 (DTPG). Residues 389 to 393 (DTPGH) and 443 to 446 (NKID) each bind GTP. Residues 443 to 446 (NKID) form a G4 region. The interval 479–481 (SAK) is G5.

The protein belongs to the TRAFAC class translation factor GTPase superfamily. Classic translation factor GTPase family. IF-2 subfamily.

The protein localises to the cytoplasm. In terms of biological role, one of the essential components for the initiation of protein synthesis. Protects formylmethionyl-tRNA from spontaneous hydrolysis and promotes its binding to the 30S ribosomal subunits. Also involved in the hydrolysis of GTP during the formation of the 70S ribosomal complex. In Cereibacter sphaeroides (strain ATCC 17029 / ATH 2.4.9) (Rhodobacter sphaeroides), this protein is Translation initiation factor IF-2.